The following is a 904-amino-acid chain: Phosphoenolpyruvate carboxylase (904 aa).

Positions 52-71 (ISRRESDAPPSTLSEQLTGR) are disordered. Residues H151 and K570 contribute to the active site.

Belongs to the PEPCase type 1 family. Mg(2+) is required as a cofactor.

The enzyme catalyses oxaloacetate + phosphate = phosphoenolpyruvate + hydrogencarbonate. Functionally, forms oxaloacetate, a four-carbon dicarboxylic acid source for the tricarboxylic acid cycle. The sequence is that of Phosphoenolpyruvate carboxylase from Xanthomonas oryzae pv. oryzae (strain MAFF 311018).